The sequence spans 144 residues: Granulocyte-macrophage colony-stimulating factor (144 aa).

An N-terminal signal peptide occupies residues 1–17; the sequence is MWLQNLLLLGTVVCSIS. S24 is a glycosylation site (O-linked (GalNAc...) serine). Residue T27 is glycosylated (O-linked (GalNAc...) threonine). N-linked (GlcNAc...) asparagine glycans are attached at residues N44, N47, and N54. 2 cysteine pairs are disulfide-bonded: C71-C113 and C105-C138.

Belongs to the GM-CSF family. In terms of assembly, monomer. The signaling GM-CSF receptor complex is a dodecamer of two head-to-head hexamers of two alpha, two beta, and two ligand subunits.

It is found in the secreted. Cytokine that stimulates the growth and differentiation of hematopoietic precursor cells from various lineages, including granulocytes, macrophages, eosinophils and erythrocytes. This is Granulocyte-macrophage colony-stimulating factor (CSF2) from Sus scrofa (Pig).